Consider the following 125-residue polypeptide: Lectin (125 aa).

One can recognise a C-type lectin domain in the interval 1-120 (MDYEILFSDE…CGGARRVICE (120 aa)). 2 disulfides stabilise this stretch: Cys21–Cys119 and Cys96–Cys111.

Homodimer.

Role in the defense system of the organism against microorganisms. This calcium-binding lectin binds galactose. This is Lectin from Polyandrocarpa misakiensis (Tunicate).